The chain runs to 401 residues: L-rhamnonate dehydratase (401 aa).

Substrate-binding residues include His-29 and Arg-55. Residues Asp-222, Glu-248, and Glu-276 each coordinate Mg(2+). His-325 acts as the Proton acceptor in catalysis. Glu-345 is a substrate binding site.

Belongs to the mandelate racemase/muconate lactonizing enzyme family. RhamD subfamily. As to quaternary structure, homooctamer; tetramer of dimers. The cofactor is Mg(2+).

The enzyme catalyses L-rhamnonate = 2-dehydro-3-deoxy-L-rhamnonate + H2O. In terms of biological role, catalyzes the dehydration of L-rhamnonate to 2-keto-3-deoxy-L-rhamnonate (KDR). In Klebsiella pneumoniae subsp. pneumoniae (strain ATCC 700721 / MGH 78578), this protein is L-rhamnonate dehydratase.